Consider the following 227-residue polypeptide: Basic leucine zipper 24 (227 aa).

A disordered region spans residues 44–68 (EDKDQDRVTRGCSHTHSCNPPGPED). The region spanning 94–160 (DSSNKKRLCG…IRLRALLVEM (67 aa)) is the bZIP domain. Residues 98–118 (KKRLCGNREAVRKYREKKKAR) form a basic motif region. The segment at 122–129 (LEDEVMRL) is leucine-zipper.

As to quaternary structure, homodimer. As to expression, expressed in young leaves and cauline leaves.

It localises to the nucleus. The protein resides in the cytoplasm. Functionally, transcription factor involved in the regulation of salt stress response. Functions as a negative transcriptional regulator of salt stress acclimation response by regulating cation homeostasis. Negatively regulates the expression of genes contributing to ion and osmotic homeostasis during salt stress, such as the Na(+) transporter HKT1, the Na(+)/H(+) antiporter SOS1, the aquaporin PIP2-1 and the glutamine synthetase GLN1-3. In addition, targets genes with functions in plant growth and development, such as argonaute 4 (AGO4) and cyclophilin 19 (CYP19). The sequence is that of Basic leucine zipper 24 from Arabidopsis thaliana (Mouse-ear cress).